The sequence spans 448 residues: GTPase Der (448 aa).

EngA-type G domains are found at residues 2–171 and 181–364; these read FTVV…PDTQ and PKIA…EEYS. GTP-binding positions include 8–15, 58–62, 123–126, 187–194, 234–238, and 305–308; these read GRPNVGKS, DTGGF, NKID, DTAGI, and NKWD. The KH-like domain maps to 365–448; the sequence is KRVSTSELNR…PINIKIKQRK (84 aa).

It belongs to the TRAFAC class TrmE-Era-EngA-EngB-Septin-like GTPase superfamily. EngA (Der) GTPase family. As to quaternary structure, associates with the 50S ribosomal subunit.

Functionally, GTPase that plays an essential role in the late steps of ribosome biogenesis. The protein is GTPase Der of Thermodesulfovibrio yellowstonii (strain ATCC 51303 / DSM 11347 / YP87).